Consider the following 211-residue polypeptide: Mediator of RNA polymerase II transcription subunit 20 (211 aa).

This sequence belongs to the Mediator complex subunit 20 family. As to quaternary structure, component of the Mediator complex.

The protein localises to the nucleus. Functionally, component of the Mediator complex, a coactivator involved in the regulated transcription of nearly all RNA polymerase II-dependent genes. Mediator functions as a bridge to convey information from gene-specific regulatory proteins to the basal RNA polymerase II transcription machinery. Mediator is recruited to promoters by direct interactions with regulatory proteins and serves as a scaffold for the assembly of a functional preinitiation complex with RNA polymerase II and the general transcription factors. This chain is Mediator of RNA polymerase II transcription subunit 20 (MED20), found in Gallus gallus (Chicken).